The following is a 990-amino-acid chain: Transposase for transposon Tn3926 (990 aa).

The segment at 673 to 698 is disordered; the sequence is GDGTTSSSDGQNFRTGSKAESTGHIN. The span at 674-696 shows a compositional bias: polar residues; sequence DGTTSSSDGQNFRTGSKAESTGH.

It belongs to the transposase 7 family.

In terms of biological role, required for transposition of transposon Tn3926. The sequence is that of Transposase for transposon Tn3926 (tnpA) from Escherichia coli.